Here is a 253-residue protein sequence, read N- to C-terminus: Carboxy-S-adenosyl-L-methionine synthase (253 aa).

S-adenosyl-L-methionine contacts are provided by residues Y49, 74 to 76, 98 to 99, and N141; these read GCS and DN.

The protein belongs to the class I-like SAM-binding methyltransferase superfamily. Cx-SAM synthase family.

The catalysed reaction is prephenate + S-adenosyl-L-methionine = carboxy-S-adenosyl-L-methionine + 3-phenylpyruvate + H2O. Its function is as follows. Catalyzes the conversion of S-adenosyl-L-methionine (SAM) to carboxy-S-adenosyl-L-methionine (Cx-SAM). This is Carboxy-S-adenosyl-L-methionine synthase from Trichodesmium erythraeum (strain IMS101).